Consider the following 90-residue polypeptide: Protein RALF-like 29 (90 aa).

The N-terminal stretch at 1-25 (MIKTKEVTFVTILIVLCVFISTIHA) is a signal peptide. 2 disulfides stabilise this stretch: cysteine 41-cysteine 50 and cysteine 63-cysteine 69.

It belongs to the plant rapid alkalinization factor (RALF) family.

It is found in the secreted. In terms of biological role, cell signaling peptide that may regulate plant stress, growth, and development. Mediates a rapid alkalinization of extracellular space by mediating a transient increase in the cytoplasmic Ca(2+) concentration leading to a calcium-dependent signaling events through a cell surface receptor and a concomitant activation of some intracellular mitogen-activated protein kinases. This Arabidopsis thaliana (Mouse-ear cress) protein is Protein RALF-like 29 (RALFL29).